Consider the following 570-residue polypeptide: Zinc finger and BTB domain-containing protein 44 (570 aa).

K4 participates in a covalent cross-link: Glycyl lysine isopeptide (Lys-Gly) (interchain with G-Cter in SUMO2). A BTB domain is found at 31–98 (CDITIRVQDK…AYTATLSINT (68 aa)). S135, S159, S161, S165, S191, and S194 each carry phosphoserine. Disordered stretches follow at residues 194–220 (SPVK…NRNQ) and 243–267 (EKVK…RRMA). Over residues 199–220 (GTQTSSPQVLNSSASYSENRNQ) the composition is skewed to polar residues. Residue T200 is modified to Phosphothreonine. K290 participates in a covalent cross-link: Glycyl lysine isopeptide (Lys-Gly) (interchain with G-Cter in SUMO2). Residues 295–369 (SDEEVHEEVS…NAPPDDDDRL (75 aa)) form a disordered region. The span at 304–318 (SQPVSASQSSLSDQQ) shows a compositional bias: low complexity. The segment covering 352-361 (TLQSTSSTNA) has biased composition (polar residues). 4 C2H2-type zinc fingers span residues 399–421 (FQCP…MLIH), 427–449 (FQCD…RLKH), 455–479 (FRCQ…VSRH), and 487–511 (YECK…SLNH).

The protein localises to the nucleus. In terms of biological role, may be involved in transcriptional regulation. In Homo sapiens (Human), this protein is Zinc finger and BTB domain-containing protein 44 (ZBTB44).